We begin with the raw amino-acid sequence, 373 residues long: Chaperone protein DnaJ (373 aa).

A J domain is found at 4–68 (NYYQILGVSK…QKRAAYDRLG (65 aa)). A CR-type zinc finger spans residues 136-214 (GIEKNISFSS…CHGMGRYHKQ (79 aa)). Cys149, Cys152, Cys166, Cys169, Cys188, Cys191, Cys202, and Cys205 together coordinate Zn(2+). CXXCXGXG motif repeat units lie at residues 149–156 (CDTCHGSG), 166–173 (CDACSGVG), 188–195 (CHKCQGNG), and 202–209 (CKKCHGMG).

This sequence belongs to the DnaJ family. As to quaternary structure, homodimer. Zn(2+) serves as cofactor.

The protein resides in the cytoplasm. Its function is as follows. Participates actively in the response to hyperosmotic and heat shock by preventing the aggregation of stress-denatured proteins and by disaggregating proteins, also in an autonomous, DnaK-independent fashion. Unfolded proteins bind initially to DnaJ; upon interaction with the DnaJ-bound protein, DnaK hydrolyzes its bound ATP, resulting in the formation of a stable complex. GrpE releases ADP from DnaK; ATP binding to DnaK triggers the release of the substrate protein, thus completing the reaction cycle. Several rounds of ATP-dependent interactions between DnaJ, DnaK and GrpE are required for fully efficient folding. Also involved, together with DnaK and GrpE, in the DNA replication of plasmids through activation of initiation proteins. The sequence is that of Chaperone protein DnaJ from Rickettsia africae (strain ESF-5).